Reading from the N-terminus, the 57-residue chain is UPF0509 protein YciZ (57 aa).

The protein belongs to the UPF0509 family.

The chain is UPF0509 protein YciZ (yciZ) from Escherichia coli O157:H7.